Here is a 142-residue protein sequence, read N- to C-terminus: Small ribosomal subunit protein bS6 (142 aa).

The segment covering 113 to 136 has biased composition (basic and acidic residues); it reads IKKEPREPREPRAPREPKAEKIEE. The tract at residues 113 to 142 is disordered; sequence IKKEPREPREPRAPREPKAEKIEEQTFSEE.

Belongs to the bacterial ribosomal protein bS6 family.

Binds together with bS18 to 16S ribosomal RNA. This chain is Small ribosomal subunit protein bS6, found in Campylobacter curvus (strain 525.92).